Consider the following 357-residue polypeptide: Probable cinnamyl alcohol dehydrogenase 2 (357 aa).

Position 47 (cysteine 47) interacts with Zn(2+). Serine 49 contributes to the NADP(+) binding site. Histidine 69, glutamate 70, cysteine 100, cysteine 103, cysteine 106, cysteine 114, and cysteine 163 together coordinate Zn(2+). NADP(+) is bound by residues threonine 167, 188–193, 211–216, threonine 251, glycine 275, and 298–300; these read GLGGVG, SSSDKK, and SFI.

The protein belongs to the zinc-containing alcohol dehydrogenase family. As to quaternary structure, homodimer. The cofactor is Zn(2+).

It catalyses the reaction (E)-cinnamyl alcohol + NADP(+) = (E)-cinnamaldehyde + NADPH + H(+). It carries out the reaction (E)-coniferol + NADP(+) = (E)-coniferaldehyde + NADPH + H(+). The catalysed reaction is (E)-sinapyl alcohol + NADP(+) = (E)-sinapaldehyde + NADPH + H(+). The enzyme catalyses (E)-4-coumaroyl alcohol + NADP(+) = (E)-4-coumaraldehyde + NADPH + H(+). It catalyses the reaction (E)-caffeyl alcohol + NADP(+) = (E)-caffeyl aldehyde + NADPH + H(+). It functions in the pathway aromatic compound metabolism; phenylpropanoid biosynthesis. Its function is as follows. Involved in lignin biosynthesis. Catalyzes the final step specific for the production of lignin monomers. Catalyzes the NADPH-dependent reduction of coniferaldehyde, 5-hydroxyconiferaldehyde, sinapaldehyde, 4-coumaraldehyde and caffeyl aldehyde to their respective alcohols. In Picea abies (Norway spruce), this protein is Probable cinnamyl alcohol dehydrogenase 2 (CAD2).